Consider the following 541-residue polypeptide: Membrane protein insertase YidC (541 aa).

The next 5 helical transmembrane spans lie at 6-26, 356-376, 430-450, 463-483, and 498-518; these read FFLI…WEIT, IIHS…LAFY, LPIL…LEMV, LSAP…MFIQ, and IMMA…SGLV.

It belongs to the OXA1/ALB3/YidC family. Type 1 subfamily. Interacts with the Sec translocase complex via SecD. Specifically interacts with transmembrane segments of nascent integral membrane proteins during membrane integration.

Its subcellular location is the cell inner membrane. Required for the insertion and/or proper folding and/or complex formation of integral membrane proteins into the membrane. Involved in integration of membrane proteins that insert both dependently and independently of the Sec translocase complex, as well as at least some lipoproteins. Aids folding of multispanning membrane proteins. This is Membrane protein insertase YidC from Vesicomyosocius okutanii subsp. Calyptogena okutanii (strain HA).